A 282-amino-acid polypeptide reads, in one-letter code: Acetyl-coenzyme A carboxylase carboxyl transferase subunit beta (282 aa).

One can recognise a CoA carboxyltransferase N-terminal domain in the interval 25 to 282 (LWTKCVSCGE…SSILTMLYRP (258 aa)). Residues Cys29, Cys32, Cys48, and Cys51 each coordinate Zn(2+). The C4-type zinc finger occupies 29–51 (CVSCGETIYTKDIENNLNVCPKC).

It belongs to the AccD/PCCB family. Acetyl-CoA carboxylase is a heterohexamer composed of biotin carboxyl carrier protein (AccB), biotin carboxylase (AccC) and two subunits each of ACCase subunit alpha (AccA) and ACCase subunit beta (AccD). The cofactor is Zn(2+).

The protein localises to the cytoplasm. The enzyme catalyses N(6)-carboxybiotinyl-L-lysyl-[protein] + acetyl-CoA = N(6)-biotinyl-L-lysyl-[protein] + malonyl-CoA. The protein operates within lipid metabolism; malonyl-CoA biosynthesis; malonyl-CoA from acetyl-CoA: step 1/1. Component of the acetyl coenzyme A carboxylase (ACC) complex. Biotin carboxylase (BC) catalyzes the carboxylation of biotin on its carrier protein (BCCP) and then the CO(2) group is transferred by the transcarboxylase to acetyl-CoA to form malonyl-CoA. The chain is Acetyl-coenzyme A carboxylase carboxyl transferase subunit beta from Citrifermentans bemidjiense (strain ATCC BAA-1014 / DSM 16622 / JCM 12645 / Bem) (Geobacter bemidjiensis).